We begin with the raw amino-acid sequence, 251 residues long: Triosephosphate isomerase (251 aa).

9–11 serves as a coordination point for substrate; the sequence is NWK. Catalysis depends on His-95, which acts as the Electrophile. Residue Glu-167 is the Proton acceptor of the active site. Residues Gly-173, Ser-212, and 233–234 contribute to the substrate site; that span reads GG.

It belongs to the triosephosphate isomerase family. Homodimer.

The protein localises to the cytoplasm. The catalysed reaction is D-glyceraldehyde 3-phosphate = dihydroxyacetone phosphate. Its pathway is carbohydrate biosynthesis; gluconeogenesis. The protein operates within carbohydrate degradation; glycolysis; D-glyceraldehyde 3-phosphate from glycerone phosphate: step 1/1. Functionally, involved in the gluconeogenesis. Catalyzes stereospecifically the conversion of dihydroxyacetone phosphate (DHAP) to D-glyceraldehyde-3-phosphate (G3P). This Pseudomonas putida (strain ATCC 700007 / DSM 6899 / JCM 31910 / BCRC 17059 / LMG 24140 / F1) protein is Triosephosphate isomerase.